Consider the following 116-residue polypeptide: uncharacterized protein (116 aa).

A disordered region spans residues 64 to 116 (RRFYSGTVNRNARSAGAASRSTSSVKRPLESKKRNARPETEKWCASYSAGNRR). Residues 73-87 (RNARSAGAASRSTSS) are compositionally biased toward low complexity. The span at 90-105 (RPLESKKRNARPETEK) shows a compositional bias: basic and acidic residues.

This is an uncharacterized protein from Saccharomyces cerevisiae (strain ATCC 204508 / S288c) (Baker's yeast).